Consider the following 142-residue polypeptide: Large ribosomal subunit protein uL11 (142 aa).

The protein belongs to the universal ribosomal protein uL11 family. In terms of assembly, part of the ribosomal stalk of the 50S ribosomal subunit. Interacts with L10 and the large rRNA to form the base of the stalk. L10 forms an elongated spine to which L12 dimers bind in a sequential fashion forming a multimeric L10(L12)X complex. Post-translationally, one or more lysine residues are methylated.

Functionally, forms part of the ribosomal stalk which helps the ribosome interact with GTP-bound translation factors. The protein is Large ribosomal subunit protein uL11 of Haemophilus ducreyi (strain 35000HP / ATCC 700724).